The following is a 1391-amino-acid chain: DNA-directed RNA polymerase subunit beta' (1391 aa).

Zn(2+) is bound by residues C72, C74, C87, and C90. The Mg(2+) site is built by D462, D464, and D466. 4 residues coordinate Zn(2+): C816, C890, C897, and C900.

The protein belongs to the RNA polymerase beta' chain family. The RNAP catalytic core consists of 2 alpha, 1 beta, 1 beta' and 1 omega subunit. When a sigma factor is associated with the core the holoenzyme is formed, which can initiate transcription. It depends on Mg(2+) as a cofactor. Requires Zn(2+) as cofactor.

It carries out the reaction RNA(n) + a ribonucleoside 5'-triphosphate = RNA(n+1) + diphosphate. In terms of biological role, DNA-dependent RNA polymerase catalyzes the transcription of DNA into RNA using the four ribonucleoside triphosphates as substrates. This Neisseria gonorrhoeae (strain NCCP11945) protein is DNA-directed RNA polymerase subunit beta'.